We begin with the raw amino-acid sequence, 239 residues long: Calcium-activated potassium channel subunit beta-3 (239 aa).

The Cytoplasmic segment spans residues 1–51 (MQPFSIPVQITLQGGRRRQGRTALPASGISNGDPLKVHPKLPSSAGEDRAT). Residues 15–38 (GRRRQGRTALPASGISNGDPLKVH) are disordered. A helical membrane pass occupies residues 52–72 (LLGIAMMASSVLMFFLLGTTV). At 73-197 (LKPFMLSSPR…GVVLRKSGHK (125 aa)) the chain is on the extracellular side. N-linked (GlcNAc...) asparagine glycosylation is found at Asn-86, Asn-123, and Asn-174. A helical transmembrane segment spans residues 198 to 218 (VVFHCLFWPLLTLLGGALIVG). Residues 219–239 (LVRLTQHLSFQCEKYRAVVRA) lie on the Cytoplasmic side of the membrane.

Belongs to the KCNMB (TC 8.A.14.1) family. KCNMB3 subfamily. In terms of assembly, interacts with KCNMA1 tetramer. There are probably 4 molecules of KCMNB3 per KCNMA1 tetramer. N-glycosylated. In terms of processing, the extracellular domain contains disulfide bond essential for the gating mechanism.

It localises to the membrane. Its function is as follows. Regulatory subunit of the calcium activated potassium KCNMA1 (maxiK) channel. Modulates the calcium sensitivity and gating kinetics of KCNMA1, thereby contributing to KCNMA1 channel diversity. Alters the functional properties of the current expressed by the KCNMA1 channel. May partially inactivate the current of KCNBMA. Two or more subunits of KCNMB3 are required to block the KCNMA1 tetramer. The sequence is that of Calcium-activated potassium channel subunit beta-3 from Rattus norvegicus (Rat).